The sequence spans 299 residues: 4-hydroxy-3-methylbut-2-enyl diphosphate reductase (299 aa).

Cysteine 12 contributes to the [4Fe-4S] cluster binding site. Residues histidine 42 and histidine 88 each contribute to the (2E)-4-hydroxy-3-methylbut-2-enyl diphosphate site. Dimethylallyl diphosphate is bound by residues histidine 42 and histidine 88. Positions 42 and 88 each coordinate isopentenyl diphosphate. Position 110 (cysteine 110) interacts with [4Fe-4S] cluster. Position 138 (histidine 138) interacts with (2E)-4-hydroxy-3-methylbut-2-enyl diphosphate. Histidine 138 contributes to the dimethylallyl diphosphate binding site. Histidine 138 is an isopentenyl diphosphate binding site. The active-site Proton donor is glutamate 140. Threonine 177 contributes to the (2E)-4-hydroxy-3-methylbut-2-enyl diphosphate binding site. Residue cysteine 205 participates in [4Fe-4S] cluster binding. Residues serine 233, asparagine 235, and serine 277 each coordinate (2E)-4-hydroxy-3-methylbut-2-enyl diphosphate. Dimethylallyl diphosphate is bound by residues serine 233, asparagine 235, and serine 277. Serine 233, asparagine 235, and serine 277 together coordinate isopentenyl diphosphate.

It belongs to the IspH family. [4Fe-4S] cluster serves as cofactor.

It carries out the reaction isopentenyl diphosphate + 2 oxidized [2Fe-2S]-[ferredoxin] + H2O = (2E)-4-hydroxy-3-methylbut-2-enyl diphosphate + 2 reduced [2Fe-2S]-[ferredoxin] + 2 H(+). It catalyses the reaction dimethylallyl diphosphate + 2 oxidized [2Fe-2S]-[ferredoxin] + H2O = (2E)-4-hydroxy-3-methylbut-2-enyl diphosphate + 2 reduced [2Fe-2S]-[ferredoxin] + 2 H(+). The protein operates within isoprenoid biosynthesis; dimethylallyl diphosphate biosynthesis; dimethylallyl diphosphate from (2E)-4-hydroxy-3-methylbutenyl diphosphate: step 1/1. Its pathway is isoprenoid biosynthesis; isopentenyl diphosphate biosynthesis via DXP pathway; isopentenyl diphosphate from 1-deoxy-D-xylulose 5-phosphate: step 6/6. Functionally, catalyzes the conversion of 1-hydroxy-2-methyl-2-(E)-butenyl 4-diphosphate (HMBPP) into a mixture of isopentenyl diphosphate (IPP) and dimethylallyl diphosphate (DMAPP). Acts in the terminal step of the DOXP/MEP pathway for isoprenoid precursor biosynthesis. This chain is 4-hydroxy-3-methylbut-2-enyl diphosphate reductase, found in Malacoplasma penetrans (strain HF-2) (Mycoplasma penetrans).